Reading from the N-terminus, the 933-residue chain is MTELKAKGPRAPHVAGGPPSPEVGSPLLCRPAAGPFPGSQTSDTLPEVSAIPISLDGLLFPRPCQGQDPSDEKTQDQQSLSDVEGAYSRAEATRGAGGSSSSPPEKDSGLLDSVLDTLLAPSGPGQSQPSPPACEVTSSWCLFGPELPEDPPAAPATQRVLSPLMSRSGCKVGDSSGTAAAHKVLPRGLSPARQLLLPASESPHWSGAPVKPSPQAAAVEVEEEDGSESEESAGPLLKGKPRALGGAAAGGGAAAVPPGAAAGGVALVPKEDSRFSAPRVALVEQDAPMAPGRSPLATTVMDFIHVPILPLNHALLAARTRQLLEDESYDGGAGAASAFAPPRSSPCASSTPVAVGDFPDCAYPPDAEPKDDAYPLYSDFQPPALKIKEEEEGAEASARSPRSYLVAGANPAAFPDFPLGPPPPLPPRATPSRPGEAAVTAAPASASVSSASSSGSTLECILYKAEGAPPQQGPFAPPPCKAPGASGCLLPRDGLPSTSASAAAAGAAPALYPALGLNGLPQLGYQAAVLKEGLPQVYPPYLNYLRPDSEASQSPQYSFESLPQKICLICGDEASGCHYGVLTCGSCKVFFKRAMEGQHNYLCAGRNDCIVDKIRRKNCPACRLRKCCQAGMVLGGRKFKKFNKVRVVRALDAVALPQPVGVPNESQALSQRFTFSPGQDIQLIPPLINLLMSIEPDVIYAGHDNTKPDTSSSLLTSLNQLGERQLLSVVKWSKSLPGFRNLHIDDQITLIQYSWMSLMVFGLGWRSYKHVSGQMLYFAPDLILNEQRMKESSFYSLCLTMWQIPQEFVKLQVSQEEFLCMKVLLLLNTIPLEGLRSQTQFEEMRSSYIRELIKAIGLRQKGVVSSSQRFYQLTKLLDNLHDLVKQLHLYCLNTFIQSRALSVEFPEMMSEVIAAQLPKILAGMVKPLLFHKK.

Residues 1–157 (MTELKAKGPR…PEDPPAAPAT (157 aa)) are disordered. The tract at residues 1–164 (MTELKAKGPR…PATQRVLSPL (164 aa)) is AF3; mediates transcriptional activation (in isoform B). A modulating, Pro-Rich region spans residues 1-566 (MTELKAKGPR…YSFESLPQKI (566 aa)). Residue lysine 7 forms a Glycyl lysine isopeptide (Lys-Gly) (interchain with G-Cter in SUMO) linkage. Serine 20 carries the post-translational modification Phosphoserine. An LXXL motif 1 motif is present at residues 55-59 (LDGLL). Phosphoserine occurs at positions 81 and 102. The LXXL motif 2 signature appears at 115–119 (LDTLL). A phosphoserine mark is found at serine 130 and serine 162. A mediates transcriptional transrepression (in isoform A) region spans residues 165–305 (MSRSGCKVGD…LATTVMDFIH (141 aa)). The Nuclear localization signal signature appears at 183–187 (KVLPR). 2 positions are modified to phosphoserine: serine 190 and serine 213. The disordered stretch occupies residues 195 to 241 (LLLPASESPHWSGAPVKPSPQAAAVEVEEEDGSESEESAGPLLKGKP). Positions 220-231 (EVEEEDGSESEE) are enriched in acidic residues. Over residues 232–241 (SAGPLLKGKP) the composition is skewed to low complexity. Serine 294 bears the Phosphoserine; by MAPK1 mark. Positions 331–351 (GGAGAASAFAPPRSSPCASST) are disordered. Positions 335-350 (AASAFAPPRSSPCASS) are enriched in low complexity. Position 345 is a phosphoserine; by MAPK (serine 345). Residue lysine 388 forms a Glycyl lysine isopeptide (Lys-Gly) (interchain with G-Cter in SUMO); alternate linkage. Residue lysine 388 forms a Glycyl lysine isopeptide (Lys-Gly) (interchain with G-Cter in ubiquitin); alternate linkage. The residue at position 400 (serine 400) is a Phosphoserine; by CDK2. A disordered region spans residues 415 to 452 (PDFPLGPPPPLPPRATPSRPGEAAVTAAPASASVSSAS). Residues 418–429 (PLGPPPPLPPRA) are compositionally biased toward pro residues. Residues 430-452 (TPSRPGEAAVTAAPASASVSSAS) are compositionally biased toward low complexity. The AF1; mediates transcriptional activation stretch occupies residues 456-546 (STLECILYKA…VYPPYLNYLR (91 aa)). Lysine 531 participates in a covalent cross-link: Glycyl lysine isopeptide (Lys-Gly) (interchain with G-Cter in SUMO). NR C4-type zinc fingers lie at residues 567–587 (CLICGDEASGCHYGVLTCGSC) and 603–627 (CAGRNDCIVDKIRRKNCPACRLRKC). The nuclear receptor DNA-binding region spans 567–639 (CLICGDEASG…AGMVLGGRKF (73 aa)). Serine 676 carries the phosphoserine modification. The NR LBD domain maps to 679-913 (QDIQLIPPLI…EFPEMMSEVI (235 aa)). Residues 687 to 933 (LINLLMSIEP…MVKPLLFHKK (247 aa)) form an AF2; mediates transcriptional activation region. Arginine 766 contributes to the progesterone binding site.

This sequence belongs to the nuclear hormone receptor family. NR3 subfamily. As to quaternary structure, interacts with SMARD1 and UNC45A. Interacts with CUEDC2; the interaction promotes ubiquitination, decreases sumoylation, and represses transcriptional activity. Interacts with PIAS3; the interaction promotes sumoylation of PR in a hormone-dependent manner, inhibits DNA-binding, and alters nuclear export. Interacts with SP1; the interaction requires ligand-induced phosphorylation on Ser-345 by ERK1/2 MAPK. Interacts with PRMT2. Isoform A interacts with NCOR2. Isoform B (but not isoform A) interacts with NCOA2 and NCOA1. Isoform B (but not isoform A) interacts with KLF9. Interacts with GTF2B. In terms of processing, phosphorylated on multiple serine sites. Several of these sites are hormone-dependent. Phosphorylation on Ser-294 occurs preferentially on isoform B, is highly hormone-dependent and modulates ubiquitination and sumoylation on Lys-388. Phosphorylation on Ser-102 and Ser-345 also requires induction by hormone. Basal phosphorylation on Ser-81, Ser-162, Ser-190 and Ser-400 is increased in response to progesterone and can be phosphorylated in vitro by the CDK2-A1 complex. Increased levels of phosphorylation on Ser-400 also in the presence of EGF, heregulin, IGF, PMA and FBS. Phosphorylation at this site by CDK2 is ligand-independent, and increases nuclear translocation and transcriptional activity. Phosphorylation at Ser-162 and Ser-294, but not at Ser-190, is impaired during the G(2)/M phase of the cell cycle. Phosphorylation on Ser-345 by ERK1/2 MAPK is required for interaction with SP1. Post-translationally, sumoylation is hormone-dependent and represses transcriptional activity. Sumoylation on all three sites is enhanced by PIAS3. Desumoylated by SENP1. Sumoylation on Lys-388, the main site of sumoylation, is repressed by ubiquitination on the same site, and modulated by phosphorylation at Ser-294. Ubiquitination is hormone-dependent and represses sumoylation on the same site. Promoted by MAPK-mediated phosphorylation on Ser-294. Ubiquitinated by UBR5, leading to its degradation: UBR5 specifically recognizes and binds ligand-bound PGR when it is not associated with coactivators (NCOAs). In presence of NCOAs, the UBR5-degron is not accessible, preventing its ubiquitination and degradation. In terms of processing, palmitoylated by ZDHHC7 and ZDHHC21. Palmitoylation is required for plasma membrane targeting and for rapid intracellular signaling via ERK and AKT kinases and cAMP generation. In terms of tissue distribution, in reproductive tissues the expression of isoform A and isoform B varies as a consequence of developmental and hormonal status. Isoform A and isoform B are expressed in comparable levels in uterine glandular epithelium during the proliferative phase of the menstrual cycle. Expression of isoform B but not of isoform A persists in the glands during mid-secretory phase. In the stroma, isoform A is the predominant form throughout the cycle. Heterogeneous isoform expression between the glands of the endometrium basalis and functionalis is implying region-specific responses to hormonal stimuli.

Its subcellular location is the nucleus. The protein resides in the cytoplasm. The protein localises to the mitochondrion outer membrane. In terms of biological role, the steroid hormones and their receptors are involved in the regulation of eukaryotic gene expression and affect cellular proliferation and differentiation in target tissues. Depending on the isoform, progesterone receptor functions as a transcriptional activator or repressor. Functionally, ligand-dependent transdominant repressor of steroid hormone receptor transcriptional activity including repression of its isoform B, MR and ER. Transrepressional activity may involve recruitment of corepressor NCOR2. Its function is as follows. Transcriptional activator of several progesteron-dependent promoters in a variety of cell types. Involved in activation of SRC-dependent MAPK signaling on hormone stimulation. Increases mitochondrial membrane potential and cellular respiration upon stimulation by progesterone. The protein is Progesterone receptor (PGR) of Homo sapiens (Human).